Here is a 380-residue protein sequence, read N- to C-terminus: Cytochrome b (380 aa).

4 helical membrane-spanning segments follow: residues 33 to 53, 77 to 98, 113 to 133, and 178 to 198; these read FGSL…FLAM, WLIR…FLHV, WNMG…GYVL, and FFAF…VHLL. Heme b-binding residues include histidine 83 and histidine 97. Heme b-binding residues include histidine 182 and histidine 196. An a ubiquinone-binding site is contributed by histidine 201. The next 4 helical transmembrane spans lie at 226 to 246, 288 to 308, 320 to 340, and 347 to 367; these read IKDL…VLFF, LGGV…PLLH, ITQT…WIGG, and FIMI…IFMP.

It belongs to the cytochrome b family. In terms of assembly, the cytochrome bc1 complex contains 11 subunits: 3 respiratory subunits (MT-CYB, CYC1 and UQCRFS1), 2 core proteins (UQCRC1 and UQCRC2) and 6 low-molecular weight proteins (UQCRH/QCR6, UQCRB/QCR7, UQCRQ/QCR8, UQCR10/QCR9, UQCR11/QCR10 and a cleavage product of UQCRFS1). This cytochrome bc1 complex then forms a dimer. Heme b serves as cofactor.

It is found in the mitochondrion inner membrane. Component of the ubiquinol-cytochrome c reductase complex (complex III or cytochrome b-c1 complex) that is part of the mitochondrial respiratory chain. The b-c1 complex mediates electron transfer from ubiquinol to cytochrome c. Contributes to the generation of a proton gradient across the mitochondrial membrane that is then used for ATP synthesis. The chain is Cytochrome b (MT-CYB) from Synaptomys borealis (Northern bog lemming).